Consider the following 138-residue polypeptide: ATP synthase epsilon chain (138 aa).

The protein belongs to the ATPase epsilon chain family. In terms of assembly, F-type ATPases have 2 components, CF(1) - the catalytic core - and CF(0) - the membrane proton channel. CF(1) has five subunits: alpha(3), beta(3), gamma(1), delta(1), epsilon(1). CF(0) has three main subunits: a, b and c.

The protein resides in the cell membrane. Produces ATP from ADP in the presence of a proton gradient across the membrane. The protein is ATP synthase epsilon chain of Streptococcus equi subsp. equi (strain 4047).